Reading from the N-terminus, the 574-residue chain is 2-succinyl-5-enolpyruvyl-6-hydroxy-3-cyclohexene-1-carboxylate synthase (574 aa).

It belongs to the TPP enzyme family. MenD subfamily. Homodimer. Requires Mg(2+) as cofactor. It depends on Mn(2+) as a cofactor. The cofactor is thiamine diphosphate.

The enzyme catalyses isochorismate + 2-oxoglutarate + H(+) = 5-enolpyruvoyl-6-hydroxy-2-succinyl-cyclohex-3-ene-1-carboxylate + CO2. Its pathway is quinol/quinone metabolism; 1,4-dihydroxy-2-naphthoate biosynthesis; 1,4-dihydroxy-2-naphthoate from chorismate: step 2/7. The protein operates within quinol/quinone metabolism; menaquinone biosynthesis. Functionally, catalyzes the thiamine diphosphate-dependent decarboxylation of 2-oxoglutarate and the subsequent addition of the resulting succinic semialdehyde-thiamine pyrophosphate anion to isochorismate to yield 2-succinyl-5-enolpyruvyl-6-hydroxy-3-cyclohexene-1-carboxylate (SEPHCHC). The protein is 2-succinyl-5-enolpyruvyl-6-hydroxy-3-cyclohexene-1-carboxylate synthase of Rubrobacter xylanophilus (strain DSM 9941 / JCM 11954 / NBRC 16129 / PRD-1).